We begin with the raw amino-acid sequence, 90 residues long: Probable Fe(2+)-trafficking protein (90 aa).

This sequence belongs to the Fe(2+)-trafficking protein family.

Its function is as follows. Could be a mediator in iron transactions between iron acquisition and iron-requiring processes, such as synthesis and/or repair of Fe-S clusters in biosynthetic enzymes. This is Probable Fe(2+)-trafficking protein from Vibrio atlanticus (strain LGP32) (Vibrio splendidus (strain Mel32)).